Reading from the N-terminus, the 156-residue chain is Small ribosomal subunit protein uS7 (156 aa).

This sequence belongs to the universal ribosomal protein uS7 family. In terms of assembly, part of the 30S ribosomal subunit. Contacts proteins S9 and S11.

In terms of biological role, one of the primary rRNA binding proteins, it binds directly to 16S rRNA where it nucleates assembly of the head domain of the 30S subunit. Is located at the subunit interface close to the decoding center, probably blocks exit of the E-site tRNA. The protein is Small ribosomal subunit protein uS7 of Leifsonia xyli subsp. xyli (strain CTCB07).